Consider the following 75-residue polypeptide: Phi-liotoxin-Lw1a (75 aa).

A signal peptide spans 1–25; that stretch reads MNFATKVSLLLLAIAVIVIVEGGEG. Positions 26–39 are excised as a propeptide; it reads DSWFEEHEESDTER. Cystine bridges form between Cys50–Cys62 and Cys56–Cys68.

Expressed by the venom gland.

It is found in the secreted. Affects the activity of both ryanodine-sensitive calcium-release channels RyR1 and RyR2 with high potency. At lower concentrations the toxin increases full openings of the RyRs, and at higher concentrations it inhibits full openings and induce openings to subconductance levels and reduces the number of full conductance openings. The different actions may be attributed to the toxins binding at different sites on the RyRs, with binding at a high-affinity site mediating the increase in full openings and the induction of subconductance states evoked upon binding to a lower-affinity site. Insect-selective toxin that provokes a dose-dependent contractile paralysis in crickets and blowfly larvae, followed by death. The chain is Phi-liotoxin-Lw1a from Hormurus waigiensis (Australian rainforest scorpion).